The sequence spans 155 residues: Gas vesicle protein K (155 aa).

Belongs to the gas vesicle GvpK family.

It localises to the gas vesicle. Functionally, might be involved in nucleating gas vesicle formation. Gas vesicles (GV) are hollow, gas filled proteinaceous nanostructures. During planktonic growth they allow positioning of the organism at a favorable depth for light or nutrient acquisition. In terms of biological role, cluster expression in E.coli (gvpA1-gvpA2-gvpC-gvpN-gvpJ-gvpK-gvpF-gvpG-gvpV-gvpW) allows cells to float and produces irregularly shaped gas vesicles. The polypeptide is Gas vesicle protein K (Nostoc sp. (strain PCC 7120 / SAG 25.82 / UTEX 2576)).